Here is a 296-residue protein sequence, read N- to C-terminus: 33 kDa chaperonin (296 aa).

Disulfide bonds link C238/C240 and C271/C274.

It belongs to the HSP33 family. Post-translationally, under oxidizing conditions two disulfide bonds are formed involving the reactive cysteines. Under reducing conditions zinc is bound to the reactive cysteines and the protein is inactive.

The protein localises to the cytoplasm. Functionally, redox regulated molecular chaperone. Protects both thermally unfolding and oxidatively damaged proteins from irreversible aggregation. Plays an important role in the bacterial defense system toward oxidative stress. The sequence is that of 33 kDa chaperonin from Clostridium botulinum (strain Okra / Type B1).